Reading from the N-terminus, the 231-residue chain is Large ribosomal subunit protein uL1 (231 aa).

This sequence belongs to the universal ribosomal protein uL1 family. In terms of assembly, part of the 50S ribosomal subunit.

Its function is as follows. Binds directly to 23S rRNA. The L1 stalk is quite mobile in the ribosome, and is involved in E site tRNA release. Protein L1 is also a translational repressor protein, it controls the translation of the L11 operon by binding to its mRNA. The protein is Large ribosomal subunit protein uL1 of Francisella tularensis subsp. tularensis (strain FSC 198).